Consider the following 278-residue polypeptide: Beta-lactamase-like protein str5 (278 aa).

Residues Val20–Thr37 form a helical membrane-spanning segment. A glycan (N-linked (GlcNAc...) asparagine) is linked at Asn112.

The protein belongs to the beta-lactamase family.

The protein localises to the membrane. It participates in mycotoxin biosynthesis. In terms of biological role, beta-lactamase-like protein; part of the gene cluster that mediates the biosynthesis of strobilurin A, an antifungal polyketide that contains a key beta-methoxyacrylate toxophore that targets the complex III of the mitochondrial electron transport chain. Strobilurin biosynthesis begins with construction of benzoyl CoA by step-wise elimination of ammonia from phenylalanine by the phenylalanine ammonia-lyase str11, oxygenation by str8 and retro-Claisen reaction to form benzoic acid, which is activated to its CoA thiolester benzoyl CoA by the dedicated CoA ligase str10. Benzoyl CoA forms the starter unit for the highly reducing polyketide synthase stpks1 that produces the polyketide prestrobilutin A. The FAD-dependent oxygenase str9 then catalyzes the key oxidative rearrangement responsible for the creation of the beta-methoxyacrylate toxophore. Str9 performs epoxidation of the 2,3 olefin of prestrobilutin A, followed by Meinwald rearrangement to furnish the aldehyde intermediate. Rapid enolization of the aldehyde intermediate would give the beta-methoxyacrylate skeleton and methylations catalyzed by str2 and str3 complete the synthesis and lead to the production of strobilurin A. The short-chain dehydrogenase stl2 and the dehydrogenase str4 play a role in the shunt pathway leading to the production of bolineol. The cluster encodes no obvious halogenase gene that could be involved in production of strobilurin B, nor any obvious dimethylallyl-transferase that could be involved in the production of strobilurin G. It is possible that unknown proteins encoded in, or near, the cluster (such as str1 or stl1) may form new classes of halogenases or dimethylally-transferases, or that the responsible genes are located elsewhere on the genome. Similarly, proteins encoded by str5/str6 hydrolases appear to have no chemical role in the biosynthesis of strobilurin A. Finally, no obvious self-resistance gene is found within the cluster. The chain is Beta-lactamase-like protein str5 from Strobilurus tenacellus.